A 255-amino-acid chain; its full sequence is 5-oxoprolinase subunit A (255 aa).

Belongs to the LamB/PxpA family. As to quaternary structure, forms a complex composed of PxpA, PxpB and PxpC.

It catalyses the reaction 5-oxo-L-proline + ATP + 2 H2O = L-glutamate + ADP + phosphate + H(+). Functionally, catalyzes the cleavage of 5-oxoproline to form L-glutamate coupled to the hydrolysis of ATP to ADP and inorganic phosphate. This chain is 5-oxoprolinase subunit A, found in Pyrococcus abyssi (strain GE5 / Orsay).